The chain runs to 145 residues: Cytochrome c-type biogenesis protein CcmE (145 aa).

Over 1 to 7 the chain is Cytoplasmic; the sequence is MKAKHQR. Residues 8–28 traverse the membrane as a helical; Signal-anchor for type II membrane protein segment; that stretch reads LILAVAALCGVAGAGVLAASA. The Periplasmic portion of the chain corresponds to 29 to 145; sequence LRDEAAYFRT…PKNMKAAVEG (117 aa). Heme is bound by residues His-123 and Tyr-127.

This sequence belongs to the CcmE/CycJ family.

It localises to the cell inner membrane. Functionally, heme chaperone required for the biogenesis of c-type cytochromes. Transiently binds heme delivered by CcmC and transfers the heme to apo-cytochromes in a process facilitated by CcmF and CcmH. The protein is Cytochrome c-type biogenesis protein CcmE of Sphingopyxis alaskensis (strain DSM 13593 / LMG 18877 / RB2256) (Sphingomonas alaskensis).